A 307-amino-acid chain; its full sequence is Pantothenate kinase (307 aa).

Residue G90–S97 coordinates ATP.

This sequence belongs to the prokaryotic pantothenate kinase family.

The protein resides in the cytoplasm. It carries out the reaction (R)-pantothenate + ATP = (R)-4'-phosphopantothenate + ADP + H(+). It participates in cofactor biosynthesis; coenzyme A biosynthesis; CoA from (R)-pantothenate: step 1/5. In Enterococcus faecalis (strain ATCC 700802 / V583), this protein is Pantothenate kinase.